A 631-amino-acid chain; its full sequence is MSATKLTRREQRARAQHFIDTLEGTAFPNSKRIYITGTHPGVRVPMREIQLSPTLIGGSKEQPQYEENEAIPVYDTSGPYGDPQIAINVQQGLAKLRQPWIDARGDTEELTVRSSDYTRTRLADDGLDELRFSGLLTPKRAKTGRRVTQLHYARQGIITPEMEFIAIRENMGRERIRSEVLRHQHPGMSFGAHLPENITAEFVRDEVAAGRAIIPANINHPESEPMIIGRNFLVKVNANIGNSAVTSSIEEEVEKLVWSTRWGADTVMDLSTGRYIHETREWILRNSPVPIGTVPIYQALEKVNGIAEDLTWEAFRDTLLEQAEQGVDYFTIHAGVLLRYVPMTAKRLTGIVSRGGSIMAKWCLSHHQENFLYQHFREICEICAAYDVSLSLGDGLRPGSIQDANDEAQFAELHTLGELTKIAWEYDVQVMIEGPGHVPMQMIRRNMTEELEHCHEAPFYTLGPLTTDIAPGYDHFTSGIGAAMIGWFGCAMLCYVTPKEHLGLPNKEDVKQGLITYKIAVHAADLAKGHPGAQIRDNAMSKARFEFRWEDQFNLALDPFTARAYHDETLPQESGKVAHFCSMCGPKFCSMKISQEVRDYAAAQTIEVGMADMSENFRARGGEIYLRKEEA.

Substrate is bound by residues asparagine 239, methionine 268, tyrosine 297, histidine 333, 353–355 (SRG), 394–397 (DGLR), and glutamate 433. Residue histidine 437 coordinates Zn(2+). Tyrosine 460 contributes to the substrate binding site. Histidine 501 is a binding site for Zn(2+). 3 residues coordinate [4Fe-4S] cluster: cysteine 581, cysteine 584, and cysteine 589.

The protein belongs to the ThiC family. Homodimer. The cofactor is [4Fe-4S] cluster.

The catalysed reaction is 5-amino-1-(5-phospho-beta-D-ribosyl)imidazole + S-adenosyl-L-methionine = 4-amino-2-methyl-5-(phosphooxymethyl)pyrimidine + CO + 5'-deoxyadenosine + formate + L-methionine + 3 H(+). Its pathway is cofactor biosynthesis; thiamine diphosphate biosynthesis. Its function is as follows. Catalyzes the synthesis of the hydroxymethylpyrimidine phosphate (HMP-P) moiety of thiamine from aminoimidazole ribotide (AIR) in a radical S-adenosyl-L-methionine (SAM)-dependent reaction. This is Phosphomethylpyrimidine synthase from Shigella sonnei (strain Ss046).